Consider the following 673-residue polypeptide: DNA topoisomerase 1 (673 aa).

The Toprim domain maps to 1 to 134; the sequence is MVAEKPKAAA…ARRMKFSTLA (134 aa). Mg(2+)-binding residues include Glu-4 and Asp-103. Residues 149–568 form the Topo IA-type catalytic domain; sequence DVEMIEAGMA…MSKKTISKLL (420 aa). The interval 189–194 is interaction with DNA; sequence SAGRVQ. The active-site O-(5'-phospho-DNA)-tyrosine intermediate is the Tyr-311. Residues 352–374 are disordered; that stretch reads LRPVQGSKDDPAHPAIHPTGEKP. The segment at 595–615 adopts a C4-type zinc-finger fold; the sequence is CHLCGRKAVSAVSGYRLCSHH.

The protein belongs to the type IA topoisomerase family. As to quaternary structure, monomer. Mg(2+) is required as a cofactor.

The enzyme catalyses ATP-independent breakage of single-stranded DNA, followed by passage and rejoining.. Its function is as follows. Releases the supercoiling and torsional tension of DNA, which is introduced during the DNA replication and transcription, by transiently cleaving and rejoining one strand of the DNA duplex. Introduces a single-strand break via transesterification at a target site in duplex DNA. The scissile phosphodiester is attacked by the catalytic tyrosine of the enzyme, resulting in the formation of a DNA-(5'-phosphotyrosyl)-enzyme intermediate and the expulsion of a 3'-OH DNA strand. The free DNA strand then undergoes passage around the unbroken strand, thus removing DNA supercoils. Finally, in the religation step, the DNA 3'-OH attacks the covalent intermediate to expel the active-site tyrosine and restore the DNA phosphodiester backbone. This Aeropyrum pernix (strain ATCC 700893 / DSM 11879 / JCM 9820 / NBRC 100138 / K1) protein is DNA topoisomerase 1.